Reading from the N-terminus, the 410-residue chain is uncharacterized protein (410 aa).

His-87 serves as a coordination point for Zn(2+). Residue Asp-89 is part of the active site. Asp-120 provides a ligand contact to Zn(2+). Glu-154 serves as the catalytic Proton acceptor. Zn(2+)-binding residues include Glu-155, Asp-184, and His-387.

It belongs to the peptidase M20A family. Requires Zn(2+) as cofactor. Co(2+) is required as a cofactor.

This is an uncharacterized protein from Methanocaldococcus jannaschii (strain ATCC 43067 / DSM 2661 / JAL-1 / JCM 10045 / NBRC 100440) (Methanococcus jannaschii).